Consider the following 66-residue polypeptide: Large ribosomal subunit protein bL35 (66 aa).

Over residues 1–16 the composition is skewed to basic residues; sequence MPKQKTHRASAKRFKR. A disordered region spans residues 1–21; the sequence is MPKQKTHRASAKRFKRTGSGG.

It belongs to the bacterial ribosomal protein bL35 family.

This chain is Large ribosomal subunit protein bL35, found in Streptococcus agalactiae serotype Ia (strain ATCC 27591 / A909 / CDC SS700).